A 239-amino-acid chain; its full sequence is tRNA (guanine-N(7)-)-methyltransferase (239 aa).

Glu69, Glu94, Asp121, and Asp144 together coordinate S-adenosyl-L-methionine. Asp144 is a catalytic residue. A substrate-binding site is contributed by Lys148. The interval 150–155 (RHNKRR) is interaction with RNA. Substrate contacts are provided by residues Asp180 and 217-220 (TKFE).

It belongs to the class I-like SAM-binding methyltransferase superfamily. TrmB family. In terms of assembly, monomer.

It carries out the reaction guanosine(46) in tRNA + S-adenosyl-L-methionine = N(7)-methylguanosine(46) in tRNA + S-adenosyl-L-homocysteine. It participates in tRNA modification; N(7)-methylguanine-tRNA biosynthesis. Its function is as follows. Catalyzes the formation of N(7)-methylguanine at position 46 (m7G46) in tRNA. This Serratia proteamaculans (strain 568) protein is tRNA (guanine-N(7)-)-methyltransferase.